Here is a 499-residue protein sequence, read N- to C-terminus: Cytochrome P450 11B1, mitochondrial (499 aa).

The transit peptide at 1 to 24 (MALRVTADVWLARPWQCLHRTRAL) directs the protein to the mitochondrion. Heme is bound at residue Cys-446.

Belongs to the cytochrome P450 family. The cofactor is heme. As to expression, adrenal zona fasciculata/reticularis.

The protein localises to the mitochondrion inner membrane. It carries out the reaction a steroid + 2 reduced [adrenodoxin] + O2 + 2 H(+) = an 11beta-hydroxysteroid + 2 oxidized [adrenodoxin] + H2O. The enzyme catalyses 21-hydroxyprogesterone + 2 reduced [adrenodoxin] + O2 + 2 H(+) = corticosterone + 2 oxidized [adrenodoxin] + H2O. It catalyses the reaction 21-hydroxyprogesterone + 2 reduced [adrenodoxin] + O2 + 2 H(+) = 18-hydroxy-11-deoxycorticosterone + 2 oxidized [adrenodoxin] + H2O. The catalysed reaction is 21-hydroxyprogesterone + 2 reduced [adrenodoxin] + O2 + 2 H(+) = 19-hydroxy-11-deoxycorticosterone + 2 oxidized [adrenodoxin] + H2O. It carries out the reaction 11-deoxycortisol + 2 reduced [adrenodoxin] + O2 + 2 H(+) = cortisol + 2 oxidized [adrenodoxin] + H2O. The enzyme catalyses cortisol + 2 reduced [adrenodoxin] + O2 + 2 H(+) = 18-hydroxycortisol + 2 oxidized [adrenodoxin] + H2O. It catalyses the reaction 11-deoxycortisol + 2 reduced [adrenodoxin] + O2 + 2 H(+) = 18-hydroxy-11-deoxycortisol + 2 oxidized [adrenodoxin] + H2O. Its pathway is steroid biosynthesis; glucocorticoid biosynthesis. It participates in steroid hormone biosynthesis. A cytochrome P450 monooxygenase involved in the biosynthesis of adrenal corticoids. Catalyzes a variety of reactions that are essential for many species, including detoxification, defense, and the formation of endogenous chemicals like steroid hormones. Steroid 11beta, 18- and 19-hydroxylase with preferred regioselectivity at 11beta, then 18, and lastly 19. Catalyzes the hydroxylation of 11-deoxycortisol and 11-deoxycorticosterone (21-hydroxyprogesterone) at 11beta position, yielding cortisol or corticosterone, respectively, but cannot produce aldosterone. Mechanistically, uses molecular oxygen inserting one oxygen atom into a substrate for hydroxylation and reducing the second into a water molecule. Two electrons are provided by NADPH via a two-protein mitochondrial transfer system comprising flavoprotein FDXR (adrenodoxin/ferredoxin reductase) and nonheme iron-sulfur protein FDX1 or FDX2 (adrenodoxin/ferredoxin). Due to its lack of 18-oxidation activity, it is incapable of generating aldosterone. Could also be involved in the androgen metabolic pathway. In Rattus norvegicus (Rat), this protein is Cytochrome P450 11B1, mitochondrial (Cyp11b1).